The primary structure comprises 129 residues: NADH-quinone oxidoreductase subunit K 2 (129 aa).

3 helical membrane passes run 3 to 23, 28 to 48, and 68 to 88; these read LAYP…GVLA, ILVL…LVAF, and LFTI…VLAV. The tract at residues 98-129 is disordered; the sequence is DKLRDTAEGPEPDGPGTDGSAPTAAEKAEATA. The span at 111 to 122 shows a compositional bias: low complexity; that stretch reads GPGTDGSAPTAA.

It belongs to the complex I subunit 4L family. As to quaternary structure, NDH-1 is composed of 14 different subunits. Subunits NuoA, H, J, K, L, M, N constitute the membrane sector of the complex.

It localises to the cell membrane. The catalysed reaction is a quinone + NADH + 5 H(+)(in) = a quinol + NAD(+) + 4 H(+)(out). Its function is as follows. NDH-1 shuttles electrons from NADH, via FMN and iron-sulfur (Fe-S) centers, to quinones in the respiratory chain. The immediate electron acceptor for the enzyme in this species is believed to be a menaquinone. Couples the redox reaction to proton translocation (for every two electrons transferred, four hydrogen ions are translocated across the cytoplasmic membrane), and thus conserves the redox energy in a proton gradient. The protein is NADH-quinone oxidoreductase subunit K 2 of Streptomyces avermitilis (strain ATCC 31267 / DSM 46492 / JCM 5070 / NBRC 14893 / NCIMB 12804 / NRRL 8165 / MA-4680).